A 217-amino-acid polypeptide reads, in one-letter code: MSGIRADGTGDVGLIIAVKRLSAAKTRLAPVFSAAARESVVLAMLMDTLTAAARVGDLRSITVITPDESAAAAATELGAEVLADPTRQGDPDPLNNAILTAEQVVSGSVPNIVVLQGDLPAMQTQELADAICAARAHQRSFVADRLGTGTAALCAFGSALDPQFGPDSSAQHRRSGAVELTGAWPGLRCDVDTPADLAAARSLGVGPATARVVAHHR.

Residues threonine 150, glycine 165, and serine 168 each contribute to the phosphoenolpyruvate site.

It belongs to the CofC family.

The enzyme catalyses phosphoenolpyruvate + GTP + H(+) = enolpyruvoyl-2-diphospho-5'-guanosine + diphosphate. It functions in the pathway cofactor biosynthesis; coenzyme F420 biosynthesis. Guanylyltransferase that catalyzes the activation of phosphoenolpyruvate (PEP) as enolpyruvoyl-2-diphospho-5'-guanosine, via the condensation of PEP with GTP. It is involved in the biosynthesis of coenzyme F420, a hydride carrier cofactor. The polypeptide is Phosphoenolpyruvate guanylyltransferase (Mycobacterium ulcerans (strain Agy99)).